Here is a 1171-residue protein sequence, read N- to C-terminus: Pyruvate:ferredoxin oxidoreductase (1171 aa).

Positions 29 and 112 each coordinate pyruvate. Residues 424-428 (SDGTV), lysine 456, asparagine 556, and asparagine 598 each bind CoA. 2 4Fe-4S ferredoxin-type domains span residues 677 to 706 (NIPQ…PYLA) and 733 to 764 (FRIQ…MVPL). The [4Fe-4S] cluster site is built by cysteine 686, cysteine 689, cysteine 692, cysteine 696, cysteine 742, cysteine 745, cysteine 748, cysteine 752, cysteine 809, and cysteine 812. Thiamine diphosphate is bound by residues glutamate 814, cysteine 837, 967–969 (DGW), and 995–1000 (TEVYSN). A [4Fe-4S] cluster-binding site is contributed by cysteine 837. Mg(2+)-binding residues include aspartate 967, threonine 995, and valine 997. Asparagine 1000 provides a ligand contact to pyruvate. Cysteine 1075 contributes to the [4Fe-4S] cluster binding site.

It belongs to the pyruvate:ferredoxin/flavodoxin oxidoreductase family. As to quaternary structure, homodimer. [4Fe-4S] cluster serves as cofactor. The cofactor is thiamine diphosphate. Requires Mg(2+) as cofactor.

It catalyses the reaction 2 oxidized [2Fe-2S]-[ferredoxin] + pyruvate + CoA = 2 reduced [2Fe-2S]-[ferredoxin] + acetyl-CoA + CO2 + H(+). Functionally, catalyzes the oxidative decarboxylation of pyruvate to acetyl-CoA and carbon dioxide. The two electrons that are generated as a result of pyruvate decarboxylation are used in the reduction of low potential ferredoxins, which provide reducing equivalents for central metabolism. Also catalyzes the reverse reaction, i.e. the synthesis of pyruvate from acetyl-CoA and carbon dioxide. Appears to function physiologically in both directions. The oxidation of pyruvate by PFOR is required to connect glycolysis and the Wood-Ljungdahl pathway of reductive acetogenesis. The conversion of acetyl-CoA to pyruvate links the Wood-Ljungdahl pathway of autotrophic CO2 fixation to the reductive tricarboxylic acid cycle. Can use methyl viologen as electron carrier in vitro. The chain is Pyruvate:ferredoxin oxidoreductase from Moorella thermoacetica (strain ATCC 39073 / JCM 9320).